We begin with the raw amino-acid sequence, 158 residues long: NADH-quinone oxidoreductase subunit B (158 aa).

The [4Fe-4S] cluster site is built by cysteine 37, cysteine 38, cysteine 102, and cysteine 132.

This sequence belongs to the complex I 20 kDa subunit family. As to quaternary structure, NDH-1 is composed of 14 different subunits. Subunits NuoB, C, D, E, F, and G constitute the peripheral sector of the complex. The cofactor is [4Fe-4S] cluster.

It localises to the cell inner membrane. It carries out the reaction a quinone + NADH + 5 H(+)(in) = a quinol + NAD(+) + 4 H(+)(out). NDH-1 shuttles electrons from NADH, via FMN and iron-sulfur (Fe-S) centers, to quinones in the respiratory chain. The immediate electron acceptor for the enzyme in this species is believed to be ubiquinone. Couples the redox reaction to proton translocation (for every two electrons transferred, four hydrogen ions are translocated across the cytoplasmic membrane), and thus conserves the redox energy in a proton gradient. The sequence is that of NADH-quinone oxidoreductase subunit B from Halorhodospira halophila (strain DSM 244 / SL1) (Ectothiorhodospira halophila (strain DSM 244 / SL1)).